The primary structure comprises 2296 residues: Protein Ycf2 (2296 aa).

1650-1657 (GSIGIGRS) contributes to the ATP binding site.

The protein belongs to the Ycf2 family.

It localises to the plastid. The protein resides in the chloroplast stroma. In terms of biological role, probable ATPase of unknown function. Its presence in a non-photosynthetic plant (Epifagus virginiana) and experiments in tobacco indicate that it has an essential function which is probably not related to photosynthesis. This is Protein Ycf2 from Arabis hirsuta (Hairy rock-cress).